A 320-amino-acid polypeptide reads, in one-letter code: MKTNNPVVQLITISADEAGQRIDNFLLAKLKGVPKSMIYRIVRKGEVRVNKGRIKPEYKLADGDVVRVPPVRVAEREEVQVSAKLDKVAALADCILFEDDYLLVLNKPSGTAVHGGSGLSFGVIEGLRALRPEARFLELVHRLDRDTSGVLLVAKKRSALRSLHEQLRLKSMQKDYLALVRGQWQSHCKAIQAPLLKNIMQSGERVVKVSSEGKPSETRFKIEERFEHATLVKASPVTGRTHQIRVHALHAGHPIAFDDRYGYREFDQQLQGTGLHRLFLHAAALRFEHPNTGETMRIEAPLDNQLRHCLLALRKNATVK.

Residues 20 to 83 (QRIDNFLLAK…AEREEVQVSA (64 aa)) enclose the S4 RNA-binding domain. Asp-144 is an active-site residue.

The protein belongs to the pseudouridine synthase RluA family.

It catalyses the reaction uridine(955/2504/2580) in 23S rRNA = pseudouridine(955/2504/2580) in 23S rRNA. Functionally, responsible for synthesis of pseudouridine from uracil at positions 955, 2504 and 2580 in 23S ribosomal RNA. The polypeptide is Ribosomal large subunit pseudouridine synthase C (rluC) (Yersinia pestis).